The primary structure comprises 250 residues: PHD finger protein ALFIN-LIKE 3 (250 aa).

An N-acetylmethionine modification is found at methionine 1. The tract at residues 146 to 192 is disordered; that stretch reads DKSSAANQNGNKSKSNSKVRTSEGKSSKTKQPKEEDEEIDEDDEDDH. Low complexity predominate over residues 149-163; it reads SAANQNGNKSKSNSK. A compositionally biased stretch (acidic residues) spans 179-192; it reads EEDEEIDEDDEDDH. Residues 194–246 form a PHD-type zinc finger; it reads ETLCGACGDSDGADEFWICCDLCEKWFHGKCVKITPARAEHIKQYKCPSCSNK.

This sequence belongs to the Alfin family. As to expression, ubiquitously expressed.

Its subcellular location is the nucleus. Histone-binding component that specifically recognizes H3 tails trimethylated on 'Lys-4' (H3K4me3), which mark transcription start sites of virtually all active genes. This Arabidopsis thaliana (Mouse-ear cress) protein is PHD finger protein ALFIN-LIKE 3 (AL3).